The following is a 116-amino-acid chain: Protein Rev (116 aa).

Ser8 bears the Phosphoserine; by host CK2 mark. The homomultimerization stretch occupies residues 18–26 (IIKILYQSN). Disordered regions lie at residues 25–49 (SNPY…RARQ) and 82–116 (SLNC…GDKE). The Nuclear localization signal and RNA-binding (RRE) motif lies at 34–50 (TRQARRNRRRRWRARQR). Over residues 36–49 (QARRNRRRRWRARQ) the composition is skewed to basic residues. Positions 73–84 (LQLPPLERLSLN) match the Nuclear export signal and binding to XPO1 motif. Ser99 is modified (phosphoserine; by host).

This sequence belongs to the HIV-1 REV protein family. In terms of assembly, homomultimer; when bound to the RRE. Multimeric assembly is essential for activity and may involve XPO1. Binds to human KPNB1, XPO1, TNPO1, RANBP5 and IPO7. Interacts with the viral Integrase. Interacts with human KHDRBS1. Interacts with human NAP1; this interaction decreases Rev multimerization and stimulates its activity. Interacts with human DEAD-box helicases DDX3 and DDX24; these interactions may serve for viral RNA export to the cytoplasm and packaging, respectively. Interacts with human PSIP1; this interaction may inhibit HIV-1 DNA integration by promoting dissociation of the Integrase-LEDGF/p75 complex. In terms of processing, asymmetrically arginine dimethylated at one site by host PRMT6. Methylation impairs the RNA-binding activity and export of viral RNA from the nucleus to the cytoplasm. Phosphorylated by protein kinase CK2. Presence of, and maybe binding to the N-terminus of the regulatory beta subunit of CK2 is necessary for CK2-mediated Rev's phosphorylation.

Its subcellular location is the host nucleus. It localises to the host nucleolus. The protein localises to the host cytoplasm. In terms of biological role, escorts unspliced or incompletely spliced viral pre-mRNAs (late transcripts) out of the nucleus of infected cells. These pre-mRNAs carry a recognition sequence called Rev responsive element (RRE) located in the env gene, that is not present in fully spliced viral mRNAs (early transcripts). This function is essential since most viral proteins are translated from unspliced or partially spliced pre-mRNAs which cannot exit the nucleus by the pathway used by fully processed cellular mRNAs. Rev itself is translated from a fully spliced mRNA that readily exits the nucleus. Rev's nuclear localization signal (NLS) binds directly to KPNB1/Importin beta-1 without previous binding to KPNA1/Importin alpha-1. KPNB1 binds to the GDP bound form of RAN (Ran-GDP) and targets Rev to the nucleus. In the nucleus, the conversion from Ran-GDP to Ran-GTP dissociates Rev from KPNB1 and allows Rev's binding to the RRE in viral pre-mRNAs. Rev multimerization on the RRE via cooperative assembly exposes its nuclear export signal (NES) to the surface. Rev can then form a complex with XPO1/CRM1 and Ran-GTP, leading to nuclear export of the complex. Conversion from Ran-GTP to Ran-GDP mediates dissociation of the Rev/RRE/XPO1/RAN complex, so that Rev can return to the nucleus for a subsequent round of export. Beside KPNB1, also seems to interact with TNPO1/Transportin-1, RANBP5/IPO5 and IPO7/RANBP7 for nuclear import. The nucleoporin-like HRB/RIP is an essential cofactor that probably indirectly interacts with Rev to release HIV RNAs from the perinuclear region to the cytoplasm. This chain is Protein Rev, found in Human immunodeficiency virus type 1 group M subtype K (isolate 97ZR-EQTB11) (HIV-1).